Reading from the N-terminus, the 550-residue chain is NAD(P)H-quinone oxidoreductase chain 4 3 (550 aa).

The next 14 helical transmembrane spans lie at 5 to 25 (FPWL…IPLL), 36 to 56 (YALI…WQHF), 86 to 106 (ISAP…FSAW), 114 to 134 (LFYA…VAKD), 135 to 155 (LFLF…LVCI), 168 to 188 (FLLY…ALSL), 212 to 232 (MWLY…FPLH), 243 to 263 (SSPV…YGLM), 277 to 297 (FAPL…FSSF), 311 to 331 (VSHM…GING), 332 to 352 (AMLQ…LAGV), 375 to 395 (VFAM…MSGF), 418 to 438 (ITVF…LSML), and 489 to 509 (IFIA…PKLL).

This sequence belongs to the complex I subunit 4 family.

The protein localises to the cellular thylakoid membrane. The enzyme catalyses a plastoquinone + NADH + (n+1) H(+)(in) = a plastoquinol + NAD(+) + n H(+)(out). It carries out the reaction a plastoquinone + NADPH + (n+1) H(+)(in) = a plastoquinol + NADP(+) + n H(+)(out). NDH-1 shuttles electrons from NAD(P)H, via FMN and iron-sulfur (Fe-S) centers, to quinones in the respiratory chain. The immediate electron acceptor for the enzyme in this species is believed to be plastoquinone. Couples the redox reaction to proton translocation (for every two electrons transferred, four hydrogen ions are translocated across the cytoplasmic membrane), and thus conserves the redox energy in a proton gradient. This is NAD(P)H-quinone oxidoreductase chain 4 3 from Picosynechococcus sp. (strain ATCC 27264 / PCC 7002 / PR-6) (Agmenellum quadruplicatum).